The sequence spans 391 residues: Phosphoglycerate kinase (391 aa).

Residues 21 to 23 (DLN), R36, 59 to 62 (HLGR), R113, and R146 each bind substrate. Residues K197, E319, and 345-348 (GGDT) each bind ATP.

This sequence belongs to the phosphoglycerate kinase family. In terms of assembly, monomer.

Its subcellular location is the cytoplasm. It carries out the reaction (2R)-3-phosphoglycerate + ATP = (2R)-3-phospho-glyceroyl phosphate + ADP. It participates in carbohydrate degradation; glycolysis; pyruvate from D-glyceraldehyde 3-phosphate: step 2/5. The polypeptide is Phosphoglycerate kinase (Shewanella baltica (strain OS223)).